A 302-amino-acid chain; its full sequence is uncharacterized protein (302 aa).

This is an uncharacterized protein from Schizosaccharomyces pombe (strain 972 / ATCC 24843) (Fission yeast).